The primary structure comprises 328 residues: tRNA uridine(34) hydroxylase (328 aa).

Residues 130-224 form the Rhodanese domain; that stretch reads LDKDTVVLDT…YGKDPEVQGE (95 aa). Residue C184 is the Cysteine persulfide intermediate of the active site.

It belongs to the TrhO family.

The enzyme catalyses uridine(34) in tRNA + AH2 + O2 = 5-hydroxyuridine(34) in tRNA + A + H2O. Its function is as follows. Catalyzes oxygen-dependent 5-hydroxyuridine (ho5U) modification at position 34 in tRNAs. The chain is tRNA uridine(34) hydroxylase from Streptococcus pneumoniae (strain P1031).